The chain runs to 262 residues: MATYAVLGSTGNTGKCLVELALQQPNAKVHAYCRNKTKLTNQLPIIIDNKRVEVFEGSIYDVDLFVDCLRGCRAVFLTITTNDNVPGCHMSQDSVRTIIAALVKLKKQQGPSGTIPKILLLSSATIDEHLNRDMPGWFKPIMKAAASNVYDDLKVAEQMLRAEDDWLTTIYIKPGGLSLDVQRGHKLSLDKQESFISYYDLAAAMIEAADDVEGRYDMKNVGVVNANGGARFPPGTPMCIAVGLLRHFFPWLHNYLPSTGPA.

The protein belongs to the avfA family.

It functions in the pathway secondary metabolite biosynthesis. In terms of biological role, oxidoreductase; part of the gene cluster that mediates the biosynthesis of dibenzodioxocinones such as pestalotiollide B, a novel class of inhibitors against cholesterol ester transfer protein (CEPT). The biosynthesis initiates from condensation of acetate and malonate units catalyzed by the non-reducing PKS pks8/GME11356. Pks8/GME11356 lacks a thioesterase (TE) domain, which is important to the cyclizing of the third ring of atrochrysone carboxylic acid, and the esterase GME11355 might play the role of TE and catalyzes the cyclization reaction of the C ring. The lactamase-like protein GME11357 (or other beta-lactamases in Pestalotiopsis microspora) probably hydrolyzes the thioester bond between the ACP of pks8/GME11356 and the intermediate to release atrochrysone carboxylic acid, which is spontaneously dehydrates to form endocrocin anthrone. Endocrocin anthrone is further converted to emodin via the endocrocin intermediate. Emodin is then oxidized by several enzymes such as the Baeyer-Villiger oxidase GME11358, the oxidoreductase GME11367, the short chain dehydrogenase/reductase GME11373, as well as by other oxidoreductases from the cluster, to modify the A and C rings and open the B ring, and finally yield monodictyphenone. The prenyltransferase GME11375 may catalyze the addition reaction between the C5 side chains and the carbon bone of dibenzodioxocinones. The remaining biochemical reactions to the final product dibenzodioxocinones should be methylation catalyzed by methyltransferase GME11366 and reduction and lactonization reaction catalyzed by a series of oxidordeuctases. The sequence is that of Oxidoreductase GME11367 from Pestalotiopsis microspora.